Consider the following 138-residue polypeptide: Protein NrdI (138 aa).

This sequence belongs to the NrdI family.

Functionally, probably involved in ribonucleotide reductase function. The polypeptide is Protein NrdI (Mycobacterium leprae (strain TN)).